The primary structure comprises 379 residues: MKILRKNHPLLKIINHSFIDLPTPSNISSWWNFGSLLGMCLVIQILTGLFLAMHYTSDTTTAFSSVAHICRDVNYGWLIRYLHANGASMFFICLFIHVGRGIYYGSYVLSETWNIGIILFLTTMATAFVGYVLPWGQMSFWGATVITNLLSAIPYIGTTLVEWIWGGFSVDKATLTRFFAFHFILPFIIAAFALVHLLFLHETGSNNPSGLNSDSDKIPFHPYYTIKDLLGIFLLLLVLMILTLFFPDILGDPDNFTPANPLNTPAHIKPEWYFLFAYAILRSIPNKLGGVLALILSILILAAFPLLNTSKQYGLIFRPVTQVIYWIFIANLLVLTWIGGQPVEYPFTMIGQIASITYFAIIIILIPVSNTIENNIIKL.

4 helical membrane-spanning segments follow: residues 33–53, 77–98, 113–133, and 178–198; these read FGSLLGMCLVIQILTGLFLAM, WLIRYLHANGASMFFICLFIHV, WNIGIILFLTTMATAFVGYVL, and FFAFHFILPFIIAAFALVHLL. 2 residues coordinate heme b: H83 and H97. 2 residues coordinate heme b: H182 and H196. An a ubiquinone-binding site is contributed by H201. Transmembrane regions (helical) follow at residues 226–246, 288–308, 320–340, and 347–367; these read IKDLLGIFLLLLVLMILTLFF, LGGVLALILSILILAAFPLLN, VTQVIYWIFIANLLVLTWIGG, and FTMIGQIASITYFAIIIILIP.

The protein belongs to the cytochrome b family. The cytochrome bc1 complex contains 11 subunits: 3 respiratory subunits (MT-CYB, CYC1 and UQCRFS1), 2 core proteins (UQCRC1 and UQCRC2) and 6 low-molecular weight proteins (UQCRH/QCR6, UQCRB/QCR7, UQCRQ/QCR8, UQCR10/QCR9, UQCR11/QCR10 and a cleavage product of UQCRFS1). This cytochrome bc1 complex then forms a dimer. Heme b is required as a cofactor.

It is found in the mitochondrion inner membrane. Functionally, component of the ubiquinol-cytochrome c reductase complex (complex III or cytochrome b-c1 complex) that is part of the mitochondrial respiratory chain. The b-c1 complex mediates electron transfer from ubiquinol to cytochrome c. Contributes to the generation of a proton gradient across the mitochondrial membrane that is then used for ATP synthesis. This Akodon subfuscus (Puno grass mouse) protein is Cytochrome b (MT-CYB).